Consider the following 452-residue polypeptide: UDP-N-acetylmuramoylalanine--D-glutamate ligase (452 aa).

115–121 (GTNGKTT) contributes to the ATP binding site.

It belongs to the MurCDEF family.

It localises to the cytoplasm. It carries out the reaction UDP-N-acetyl-alpha-D-muramoyl-L-alanine + D-glutamate + ATP = UDP-N-acetyl-alpha-D-muramoyl-L-alanyl-D-glutamate + ADP + phosphate + H(+). The protein operates within cell wall biogenesis; peptidoglycan biosynthesis. Cell wall formation. Catalyzes the addition of glutamate to the nucleotide precursor UDP-N-acetylmuramoyl-L-alanine (UMA). The sequence is that of UDP-N-acetylmuramoylalanine--D-glutamate ligase from Geobacter sp. (strain M21).